A 342-amino-acid chain; its full sequence is L-threonine 3-dehydrogenase (342 aa).

C38 is a Zn(2+) binding site. Active-site charge relay system residues include T40 and H43. Residues H63, E64, C93, C96, C99, and C107 each coordinate Zn(2+). NAD(+)-binding positions include I175, D195, R200, 262–264 (LGI), and 286–287 (IY).

Belongs to the zinc-containing alcohol dehydrogenase family. As to quaternary structure, homotetramer. It depends on Zn(2+) as a cofactor.

It localises to the cytoplasm. It carries out the reaction L-threonine + NAD(+) = (2S)-2-amino-3-oxobutanoate + NADH + H(+). Its pathway is amino-acid degradation; L-threonine degradation via oxydo-reductase pathway; glycine from L-threonine: step 1/2. In terms of biological role, catalyzes the NAD(+)-dependent oxidation of L-threonine to 2-amino-3-ketobutyrate. This is L-threonine 3-dehydrogenase from Burkholderia vietnamiensis (strain G4 / LMG 22486) (Burkholderia cepacia (strain R1808)).